The sequence spans 388 residues: F-box/kelch-repeat protein At3g17530 (388 aa).

Residues 1-50 (MMISDLPHDLESEILSRVPAKSLAKWKTTCKRWYALFRDPSFVKKNFDKA) enclose the F-box domain. Kelch repeat units lie at residues 163-208 (CCYY…VSLK) and 336-383 (RIYI…AEEN).

This Arabidopsis thaliana (Mouse-ear cress) protein is F-box/kelch-repeat protein At3g17530.